A 912-amino-acid chain; its full sequence is Probable transmembrane GTPase FZO-like, chloroplastic (912 aa).

Residues 1–54 constitute a chloroplast transit peptide; that stretch reads MRTLISHRQCVTSPFLISAASPPFPGRCFKLSSFTPPRHRRFSSLSIRNISHES. The disordered stretch occupies residues 51 to 71; sequence SHESADQTSSSRPRTLYPGGY. The Stromal segment spans residues 55 to 773; that stretch reads ADQTSSSRPR…SKRLEQDIRE (719 aa). Residues 359–364 and Ser-521 contribute to the GTP site; that span reads NSGKST. Residues 774-794 form a helical membrane-spanning segment; it reads VFFVTVGGLGAAGLSASLLTS. Over 795–801 the chain is Chloroplast intermembrane; it reads VLPTTLE. A helical membrane pass occupies residues 802 to 822; sequence DLLALGLCSAGGYVAIANFPY. At 823–912 the chain is on the stromal side; it reads RRQAIIGKVN…LHVSRDEMRL (90 aa). A coiled-coil region spans residues 877–904; sequence DRLLGIQKELSDIRSKLQLLQVDIDNLH.

This sequence belongs to the TRAFAC class dynamin-like GTPase superfamily. Dynamin/Fzo/YdjA family. Mitofusin subfamily.

It localises to the plastid. The protein resides in the chloroplast inner membrane. Its subcellular location is the chloroplast thylakoid membrane. Probable membrane-remodeling GTPase that plays a unique role in the in the determination of thylakoid and chloroplast morphology and regulates organization of the thylakoid network. Not involved in the determination of mitochondrial morphology or ultrastructure. This chain is Probable transmembrane GTPase FZO-like, chloroplastic, found in Arabidopsis thaliana (Mouse-ear cress).